Consider the following 225-residue polypeptide: Heptaprenylglyceryl phosphate synthase (225 aa).

Lys6 is a sn-glycerol 1-phosphate binding site. Mg(2+) is bound by residues Asp8 and Thr34. Sn-glycerol 1-phosphate is bound by residues 153-158, Gly183, and 203-204; these read YVEYSG and GN.

This sequence belongs to the GGGP/HepGP synthase family. Group I subfamily. As to quaternary structure, homodimer. Mg(2+) is required as a cofactor.

It catalyses the reaction sn-glycerol 1-phosphate + all-trans-heptaprenyl diphosphate = 3-heptaprenyl-sn-glycero-1-phosphate + diphosphate. It functions in the pathway membrane lipid metabolism; glycerophospholipid metabolism. Prenyltransferase that catalyzes in vivo the transfer of the heptaprenyl moiety of heptaprenyl pyrophosphate (HepPP; 35 carbon atoms) to the C3 hydroxyl of sn-glycerol-1-phosphate (G1P), producing heptaprenylglyceryl phosphate (HepGP). This reaction is an ether-bond-formation step in the biosynthesis of archaea-type G1P-based membrane lipids found in Bacillales. In Listeria monocytogenes serotype 4b (strain F2365), this protein is Heptaprenylglyceryl phosphate synthase.